The following is a 41-amino-acid chain: Competence-stimulating peptide type 1 (41 aa).

A propeptide spanning residues 1 to 24 (MKNTVKLEQFVALKEKDLQKIKGG) is cleaved from the precursor.

It belongs to the ComC family.

It is found in the secreted. Its function is as follows. Acts as a pheromone, induces cells to develop competence for genetic transformation. In Streptococcus pneumoniae, this protein is Competence-stimulating peptide type 1 (comC1).